The following is a 7311-amino-acid chain: MAM and LDL-receptor class A domain-containing protein 2 (7311 aa).

MAM domains are found at residues Ala4 to Thr171, Leu199 to Pro361, Lys363 to Pro530, Gly532 to Val695, Tyr727 to Val887, Met889 to Leu1050, Gly1052 to Leu1220, Phe1228 to Ser1392, Gly1394 to Ala1557, Gly1559 to Gln1722, Asn1755 to Ser1918, Thr1920 to Leu2087, Gly2089 to Val2254, Asn2274 to Pro2437, Thr2439 to Pro2601, and Gly2603 to Gly2771. The tract at residues Trp2461 to Thr2481 is disordered. The segment covering Gly2466–Pro2475 has biased composition (low complexity). 2 P-type domains span residues Gly2771–Pro2817 and Ser2818–Pro2862. Cystine bridges form between Cys2773-Cys2802, Cys2784-Cys2801, Cys2795-Cys2813, Cys2820-Cys2847, Cys2831-Cys2846, and Cys2841-Cys2858. MAM domains lie at Trp2883–Pro3048, Arg3050–Pro3214, Gly3216–Ser3384, and Gly3429–Leu3587. The LDL-receptor class A 1 domain maps to Ser3593 to Tyr3628. 3 disulfides stabilise this stretch: Cys3594-Cys3605, Cys3600-Cys3618, and Cys3612-Cys3627. An MAM 21 domain is found at Tyr3632–Ser3794. 2 LDL-receptor class A domains span residues Pro3814–Gly3850 and Ser4016–Ala4054. 3 disulfides stabilise this stretch: Cys3815-Cys3827, Cys3822-Cys3840, and Cys3834-Cys3849. The MAM 22 domain maps to Gly3850–Leu4011. Disulfide bonds link Cys4017–Cys4029, Cys4024–Cys4042, and Cys4036–Cys4053. The MAM 23 domain maps to Glu4058 to Pro4221. Residues Gly4239–Pro4276 form the LDL-receptor class A 4 domain. 3 disulfide bridges follow: Cys4240/Cys4253, Cys4247/Cys4266, and Cys4260/Cys4275. Residues Ala4277 to Glu4438 enclose the MAM 24 domain. The LDL-receptor class A 5 domain maps to Thr4444 to Ala4483. 3 cysteine pairs are disulfide-bonded: Cys4445–Cys4458, Cys4453–Cys4471, and Cys4465–Cys4482. The MAM 25 domain maps to Asn4486 to Val4646. LDL-receptor class A domains lie at Pro4660–Gly4699 and Tyr4859–Ser4899. Cystine bridges form between Cys4668-Cys4687, Cys4681-Cys4698, Cys4860-Cys4876, Cys4871-Cys4889, and Cys4883-Cys4898. One can recognise an MAM 26 domain in the interval Trp4700–Gly4862. One can recognise an MAM 27 domain in the interval Ser4903–Gln5063. Residues Asn5085–Pro5122 enclose the LDL-receptor class A 8 domain. 3 disulfides stabilise this stretch: Cys5086–Cys5099, Cys5093–Cys5112, and Cys5106–Cys5121. The region spanning His5123–Leu5281 is the MAM 28 domain. Residues Ser5287–Gly5322 enclose the LDL-receptor class A 9 domain. 3 disulfides stabilise this stretch: Cys5288–Cys5299, Cys5294–Cys5312, and Cys5306–Cys5321. An MAM 29 domain is found at Thr5326–Gln5489. One can recognise an LDL-receptor class A 10 domain in the interval Gln5513 to Ala5552. Disulfide bonds link Cys5514–Cys5529, Cys5521–Cys5542, and Cys5536–Cys5551. Residues Thr5554–Pro5719 form the MAM 30 domain. The LDL-receptor class A 11 domain maps to Lys5725–Ser5763. Cystine bridges form between Cys5726/Cys5738, Cys5733/Cys5751, and Cys5745/Cys5762. Residues Gly5768–Asp5935 enclose the MAM 31 domain. The LDL-receptor class A 12 domain occupies Pro5957–Gly5993. 3 disulfides stabilise this stretch: Cys5958–Cys5970, Cys5965–Cys5983, and Cys5977–Cys5992. The MAM 32 domain occupies Ser5994–Val6156. The disordered stretch occupies residues Asn6014–Asp6034. Over residues Lys6023 to Asp6034 the composition is skewed to polar residues. An LDL-receptor class A 13 domain is found at Thr6161 to Ser6200. Cystine bridges form between Cys6162/Cys6175, Cys6169/Cys6188, and Cys6182/Cys6199. In terms of domain architecture, MAM 33 spans Ala6204 to Lys6365. The region spanning Arg6377–Pro6414 is the LDL-receptor class A 14 domain. Cystine bridges form between Cys6378–Cys6391, Cys6385–Cys6404, and Cys6398–Cys6413. 4 MAM domains span residues Ala6430 to Lys6590, Leu6606 to Phe6779, Gly6808 to Phe6965, and Gly7173 to Leu7311.

In terms of tissue distribution, component of the acid-insoluble and acid-soluble organic matrix of the aragonitic skeleton (at protein level).

Its subcellular location is the secreted. The chain is MAM and LDL-receptor class A domain-containing protein 2 from Acropora millepora (Staghorn coral).